The primary structure comprises 442 residues: C4-dicarboxylate transport protein 2 (442 aa).

9 helical membrane passes run 20-39 (QLYV…GHYY), 52-74 (AFIK…TGIA), 89-111 (AMLY…ANVV), 141-158 (VTGF…GAFA), 162-179 (ILQV…LALV), 200-221 (LVSV…FTIG), 231-253 (LAML…LGAV), 342-364 (ILLL…AGFI), and 368-387 (ATLS…ILGV).

It belongs to the dicarboxylate/amino acid:cation symporter (DAACS) (TC 2.A.23) family.

The protein localises to the cell inner membrane. Responsible for the transport of dicarboxylates such as succinate, fumarate, and malate from the periplasm across the membrane. This transport system plays an important role in the energy supply of rhizobium-legume symbionts. This chain is C4-dicarboxylate transport protein 2 (dctA2), found in Mesorhizobium japonicum (strain LMG 29417 / CECT 9101 / MAFF 303099) (Mesorhizobium loti (strain MAFF 303099)).